The primary structure comprises 156 residues: Translation initiation factor IF-1, chloroplastic (156 aa).

The segment at 1 to 35 (MAASLTLMTSPPCSRSSKSPSPSPSPSLSCNQQQQ) is disordered. A chloroplast-targeting transit peptide spans 1–49 (MAASLTLMTSPPCSRSSKSPSPSPSPSLSCNQQQQYKPLLHHQWPPQIS). The span at 10–20 (SPPCSRSSKSP) shows a compositional bias: low complexity. The S1-like domain maps to 72–148 (GGSPSVQEQK…TRGRITYRLR (77 aa)).

It belongs to the IF-1 family. Component of the 30S ribosomal translation pre-initiation complex which assembles on the 30S ribosome in the order IF-2 and IF-3, IF-1 and N-formylmethionyl-tRNA(fMet); mRNA recruitment can occur at any time during PIC assembly.

The protein resides in the plastid. The protein localises to the chloroplast. In terms of biological role, one of the essential components for the initiation of protein synthesis. Stabilizes the binding of IF-2 and IF-3 on the 30S subunit to which N-formylmethionyl-tRNA(fMet) subsequently binds. Helps modulate mRNA selection, yielding the 30S pre-initiation complex (PIC). Upon addition of the 50S ribosomal subunit IF-1, IF-2 and IF-3 are released leaving the mature 70S translation initiation complex. In Mesembryanthemum crystallinum (Common ice plant), this protein is Translation initiation factor IF-1, chloroplastic (infA).